The sequence spans 106 residues: MAHAKKRVRRKLLTSTDDPILSNTFTMRPTSKIADAEIISREHDYIASKTQTDSKKISPLSVILDKTVLFEFYGIGDNNEKAIVYPIDPDFLLCDSEHNCTLSPFL.

This is an uncharacterized protein from Homo sapiens (Human).